A 156-amino-acid polypeptide reads, in one-letter code: Ribosomal RNA large subunit methyltransferase H (156 aa).

S-adenosyl-L-methionine is bound by residues L73, G104, and 123-128; that span reads LSPLTL.

This sequence belongs to the RNA methyltransferase RlmH family. As to quaternary structure, homodimer.

The protein resides in the cytoplasm. The enzyme catalyses pseudouridine(1915) in 23S rRNA + S-adenosyl-L-methionine = N(3)-methylpseudouridine(1915) in 23S rRNA + S-adenosyl-L-homocysteine + H(+). In terms of biological role, specifically methylates the pseudouridine at position 1915 (m3Psi1915) in 23S rRNA. The protein is Ribosomal RNA large subunit methyltransferase H of Marinobacter nauticus (strain ATCC 700491 / DSM 11845 / VT8) (Marinobacter aquaeolei).